We begin with the raw amino-acid sequence, 562 residues long: MPLPYKVNFKLPLEYLSLQDWNNFVQNLIFINQYGTAKLLQYYKNGSFQNLKDVFAKYLYVAQLKVNGYNVLHNLSEPLAYTFGNVFQELANKPSINLPEINVPVSSINYKLPPVEKQIEALIPNLISKISIPINIAGTQFTFSGNSNLAQLTSQYLQSVYLQTWRSITLQNLGNSSVQINNSIYLMPKQCLKITVSNPQEVQISAQSSTLLSELIEFNVIPITAYTITITNSQPDPTPSPFQQLLILNLSNIISSPSQLLNLQFCLDSQCKTPLYSWIESYNSNLSNVYIWINLPISIPANSSITIYMFVRNSIQYPYTGMRPDLTSTYAQYDNGKNVFLIYFNGNEPLSNFNTEGNTIQQISTIGPLGNTINAIYLSGYSNNVGFVYTGKSVPNQPVIVEASAKDMDNQTGGLGADNGQAGIADSTNTAIINAIGVTMGNNSDYFSQDFYINGSETRGYNLQGSAVSQWVYAWVVYQGSSASSWSGCIAPQLYSSNGGYCGTVNNNPLSSSTQLYLAVIGGVGYYDYWQTAWNFMRMRTYPPNGVMPSNTNPQLTTIYVA.

This is an uncharacterized protein from Saccharolobus islandicus (Sulfolobus islandicus).